We begin with the raw amino-acid sequence, 398 residues long: Fe-regulated protein 8 (398 aa).

Functionally, protein of unknown function; part of the gene cluster that mediates the biosynthesis of siderophore ferrichrome A which is contributing to organismal virulence. In Mycosarcoma maydis (Corn smut fungus), this protein is Fe-regulated protein 8.